The primary structure comprises 388 residues: tRNA (guanine(26)-N(2))-dimethyltransferase (388 aa).

The 380-residue stretch at 4-383 (KTIVEGTTKV…APITEIKEII (380 aa)) folds into the Trm1 methyltransferase domain. S-adenosyl-L-methionine contacts are provided by Arg-41, Arg-78, Asp-94, and Ala-123. Residues Cys-251, Cys-254, Cys-271, and Cys-274 each contribute to the Zn(2+) site.

This sequence belongs to the class I-like SAM-binding methyltransferase superfamily. Trm1 family.

The enzyme catalyses guanosine(26) in tRNA + 2 S-adenosyl-L-methionine = N(2)-dimethylguanosine(26) in tRNA + 2 S-adenosyl-L-homocysteine + 2 H(+). Dimethylates a single guanine residue at position 26 of a number of tRNAs using S-adenosyl-L-methionine as donor of the methyl groups. This is tRNA (guanine(26)-N(2))-dimethyltransferase from Methanosarcina barkeri (strain Fusaro / DSM 804).